Here is a 273-residue protein sequence, read N- to C-terminus: Putative phosphoenolpyruvate synthase regulatory protein (273 aa).

Residue 153-160 (AVSRAGKT) coordinates ADP.

Belongs to the pyruvate, phosphate/water dikinase regulatory protein family. PSRP subfamily.

It carries out the reaction [pyruvate, water dikinase] + ADP = [pyruvate, water dikinase]-phosphate + AMP + H(+). It catalyses the reaction [pyruvate, water dikinase]-phosphate + phosphate + H(+) = [pyruvate, water dikinase] + diphosphate. Functionally, bifunctional serine/threonine kinase and phosphorylase involved in the regulation of the phosphoenolpyruvate synthase (PEPS) by catalyzing its phosphorylation/dephosphorylation. This chain is Putative phosphoenolpyruvate synthase regulatory protein, found in Stenotrophomonas maltophilia (strain R551-3).